The following is an 818-amino-acid chain: Exchange factor for Arf-6 (818 aa).

4 disordered regions span residues 92–123 (AQKL…ESSP), 137–168 (MEST…ENDD), 208–291 (NHHH…GVSN), and 326–383 (RTTP…VGGE). Positions 107 to 119 (IERRGSLARKTSE) are enriched in basic and acidic residues. Positions 140-149 (TDVEESEEET) are enriched in acidic residues. The span at 154-165 (TDEKENQKKPNE) shows a compositional bias: basic and acidic residues. Polar residues-rich tracts occupy residues 213-223 (YNSSPQISTLS) and 255-269 (MSNN…SPEN). Residues 326–347 (RTTPNTAASNSSASASPSLHAT) show a composition bias toward low complexity. The SEC7 domain occupies 356–532 (GVSLRSAESS…KTLFQSIKDN (177 aa)). The span at 361–380 (SAESSNLNQTAVPSTSTNSV) shows a compositional bias: polar residues. The PH domain occupies 569–681 (VEYYSGFLMR…WCEKINFVAA (113 aa)). A compositionally biased stretch (polar residues) spans 782–799 (TMNIMMTPTRRQQQNQKP). Residues 782–818 (TMNIMMTPTRRQQQNQKPVVSEDRLSYTDAVNGAAAH) are disordered.

In terms of assembly, interacts (via short N-terminal region) with microtubule-associated proteins tac-1 and zyg-8.

Its subcellular location is the cytoplasm. The protein localises to the cell cortex. The protein resides in the cell membrane. Functionally, guanine nucleotide exchange factor for arf-6. Involved in response to injury in mechanosensory neurons. Inhibits axon regrowth via microtubule dynamics, possibly by inducing axonal microtubule catastrophes. Limits microtubule growth near the cellular cortex of early embryonic cells. This is Exchange factor for Arf-6 from Caenorhabditis elegans.